Reading from the N-terminus, the 534-residue chain is Probable alkaline/neutral invertase D (534 aa).

Phosphoserine occurs at positions 7 and 37. A Phosphothreonine modification is found at threonine 55. Serine 532 is modified (phosphoserine).

The protein belongs to the glycosyl hydrolase 100 family.

The enzyme catalyses Hydrolysis of terminal non-reducing beta-D-fructofuranoside residues in beta-D-fructofuranosides.. Its function is as follows. Invertase that cleaves sucrose into glucose and fructose. The protein is Probable alkaline/neutral invertase D of Arabidopsis thaliana (Mouse-ear cress).